Consider the following 280-residue polypeptide: L-proline cis-4-hydroxylase (280 aa).

Fe cation is bound by residues histidine 106, aspartate 108, and histidine 154. Arginine 164 serves as a coordination point for 2-oxoglutarate.

The protein belongs to the L-proline cis-4-/cis-3-hydroxylase family. Fe(2+) serves as cofactor.

It carries out the reaction L-proline + 2-oxoglutarate + O2 = cis-4-hydroxy-L-proline + succinate + CO2. Inhibited by metal ions such as Co(2+), Zn(2+), Cu(2+) or Ni(2+). Is also inhibited by EDTA or diethylpyrocarbonate (DEPC) in vitro. Unlike the procollagen-proline cis-3- and trans-4-hydroxylases from mammals, does not necessarily require L-ascorbate for activity although it does increase the activity of the enzyme. In terms of biological role, dioxygenase that catalyzes the 2-oxoglutarate-dependent selective hydroxylation of free L-proline to cis-4-hydroxy-L-proline (cis-4-Hyp). This is L-proline cis-4-hydroxylase from Rhizobium meliloti (strain 1021) (Ensifer meliloti).